A 282-amino-acid polypeptide reads, in one-letter code: Bis(5'-nucleosyl)-tetraphosphatase, symmetrical (282 aa).

This sequence belongs to the Ap4A hydrolase family.

It carries out the reaction P(1),P(4)-bis(5'-adenosyl) tetraphosphate + H2O = 2 ADP + 2 H(+). Functionally, hydrolyzes diadenosine 5',5'''-P1,P4-tetraphosphate to yield ADP. The protein is Bis(5'-nucleosyl)-tetraphosphatase, symmetrical of Klebsiella pneumoniae subsp. pneumoniae (strain ATCC 700721 / MGH 78578).